The following is a 294-amino-acid chain: Probable 2-(5''-triphosphoribosyl)-3'-dephosphocoenzyme-A synthase (294 aa).

Belongs to the CitG/MdcB family.

The enzyme catalyses 3'-dephospho-CoA + ATP = 2'-(5''-triphospho-alpha-D-ribosyl)-3'-dephospho-CoA + adenine. The sequence is that of Probable 2-(5''-triphosphoribosyl)-3'-dephosphocoenzyme-A synthase from Streptococcus pyogenes serotype M3 (strain ATCC BAA-595 / MGAS315).